The chain runs to 783 residues: Ras and Rab interactor 1 (783 aa).

Position 1 is an N-acetylmethionine (M1). The disordered stretch occupies residues 1–53 (MESPGESGAGSPGAPSPSSFTTGHLAREKPAQDPLYDVPNASGGQAGGPQRPG). A phosphoserine mark is found at S3 and S16. At Y36 the chain carries Phosphotyrosine; by ABL1 and ABL2. An SH2 domain is found at 69-163 (WLQLQANAAA…ILLLPLQLPR (95 aa)). S210, S258, S333, and S337 each carry phosphoserine. Disordered regions lie at residues 250–282 (STET…ERLP) and 295–342 (YRVP…HLGR). Positions 257–269 (LSPPAVPPPPVPV) are enriched in pro residues. Residues 294 to 727 (GYRVPAGSGP…GSGQSEARSR (434 aa)) form a ras and 14-3-3 protein binding region region. Over residues 317-334 (GSPSSSEEEGVPGSRGSP) the composition is skewed to low complexity. S351 bears the Phosphoserine; by PKD/PRKD1 mark. In terms of domain architecture, VPS9 spans 456-598 (LAADGSLGRL…LSGLGQAHTL (143 aa)). S609 and S611 each carry phosphoserine. The Ras-associating domain maps to 624–706 (FQHLLRVAYQ…GYLVYRRAEW (83 aa)). R692 is subject to Omega-N-methylarginine. The tract at residues 709–783 (TQGAVTEEEG…EAEGSRAAEE (75 aa)) is disordered. Residues 762–772 (QAQEGPAQPGE) show a composition bias toward low complexity.

The protein belongs to the RIN (Ras interaction/interference) family. As to quaternary structure, interacts with the GTP-bound form of Ras proteins (NRAS, HRAS and KRAS). This interaction prevents the association between RAF1 and Ras. Interacts with 14-3-3 proteins YWHAB, YWHAE and YWHAZ when phosphorylated on Ser-351. Interacts with the SH3 domain of ABL1 and ABL2. Interacts with RAB5A. The interaction with Ras is probably regulated and antagonized by the interaction with 14-3-3 proteins. The interaction with 14-3-3 proteins is regulated by phosphorylation on Ser-351. Post-translationally, phosphorylated on tyrosine residues by ABL1 and ABL2. Phosphorylation at Ser-351 by PRKD1 induces interaction with 14-3-3 proteins. Expressed in all tissues examined with high levels in brain, placenta and pancreas.

The protein resides in the cytoplasm. It is found in the membrane. The protein localises to the cytoskeleton. Functionally, ras effector protein, which may serve as an inhibitory modulator of neuronal plasticity in aversive memory formation. Can affect Ras signaling at different levels. First, by competing with RAF1 protein for binding to activated Ras. Second, by enhancing signaling from ABL1 and ABL2, which regulate cytoskeletal remodeling. Third, by activating RAB5A, possibly by functioning as a guanine nucleotide exchange factor (GEF) for RAB5A, by exchanging bound GDP for free GTP, and facilitating Ras-activated receptor endocytosis. The sequence is that of Ras and Rab interactor 1 (RIN1) from Homo sapiens (Human).